A 254-amino-acid polypeptide reads, in one-letter code: Phosphoglycerate mutase 1 (254 aa).

Substrate contacts are provided by residues 10 to 17 (RHGESTWN) and 23 to 24 (SG). His11 (tele-phosphohistidine intermediate) is an active-site residue. Residues Ser14 and Ser23 each carry the phosphoserine modification. Tyr26 bears the Phosphotyrosine mark. Phosphoserine is present on Ser31. Substrate-binding positions include Arg62, 89–92 (ERHY), and Lys100. Glu89 acts as the Proton donor/acceptor in catalysis. Lys106 carries the post-translational modification N6-acetyllysine. Position 116-117 (116-117 (RR)) interacts with substrate. The residue at position 118 (Ser118) is a Phosphoserine. 187-188 (GN) contacts substrate. The residue at position 251 (Lys251) is an N6-acetyllysine; alternate. An N6-succinyllysine; alternate modification is found at Lys251. An N6-acetyllysine mark is found at Lys253 and Lys254.

This sequence belongs to the phosphoglycerate mutase family. BPG-dependent PGAM subfamily. Homodimer. In terms of processing, acetylated at Lys-253, Lys-253 and Lys-254 under high glucose condition. Acetylation increases catalytic activity. Under glucose restriction SIRT1 levels dramatically increase and it deacetylates the enzyme.

It catalyses the reaction (2R)-2-phosphoglycerate = (2R)-3-phosphoglycerate. The enzyme catalyses (2R)-3-phospho-glyceroyl phosphate = (2R)-2,3-bisphosphoglycerate + H(+). Functionally, catalyzes the interconversion of 2-phosphoglycerate and 3-phosphoglyceratea crucial step in glycolysis, by using 2,3-bisphosphoglycerate. Also catalyzes the interconversion of (2R)-2,3-bisphosphoglycerate and (2R)-3-phospho-glyceroyl phosphate. The sequence is that of Phosphoglycerate mutase 1 from Bos taurus (Bovine).